We begin with the raw amino-acid sequence, 122 residues long: Large ribosomal subunit protein uL14 (122 aa).

This sequence belongs to the universal ribosomal protein uL14 family. In terms of assembly, part of the 50S ribosomal subunit. Forms a cluster with proteins L3 and L19. In the 70S ribosome, L14 and L19 interact and together make contacts with the 16S rRNA in bridges B5 and B8.

Functionally, binds to 23S rRNA. Forms part of two intersubunit bridges in the 70S ribosome. The sequence is that of Large ribosomal subunit protein uL14 from Bacillus anthracis (strain A0248).